We begin with the raw amino-acid sequence, 1004 residues long: Liprin-beta homolog (1004 aa).

Low complexity-rich tracts occupy residues N50–S63 and S149–L161. Disordered regions lie at residues N50–R122 and H135–L161. 2 coiled-coil regions span residues C280–S328 and D364–E396. 4 disordered regions span residues H341–M366, P432–Q497, N528–S550, and F648–V686. The span at D434–G453 shows a compositional bias: polar residues. A compositionally biased stretch (low complexity) spans S458–S474. Composition is skewed to polar residues over residues E531 to S541 and F648 to G684. SAM domains follow at residues W698–D762, W770–A833, and V858–P930.

The protein belongs to the liprin family. Liprin-beta subfamily. In terms of tissue distribution, expressed in pharyngeal muscle, particularly posterior bulb, adjacent to the dorsal and ventral cord (but not in ventral cord neurons), and in body wall muscles.

In terms of biological role, involved in the regulation of synaptic function at neuromuscular junctions. Together with the liprin-alpha protein syd-2, may play a role in regulating the structure of the neuronal region, called the active zone, from which synaptic vesicles send neurotransmitter signals across the synapse. Does not seem to be required for neuronal development. May regulate the disassembly of focal adhesions. Does not bind receptor-like tyrosine phosphatases type 2A. In Caenorhabditis elegans, this protein is Liprin-beta homolog.